The sequence spans 77 residues: Putative defensin-like protein 129 (77 aa).

An N-terminal signal peptide occupies residues 1–25 (MTKNTALTIFMVVLVIEMVMEETQG). 4 disulfides stabilise this stretch: Cys28-Cys77, Cys37-Cys59, Cys42-Cys71, and Cys46-Cys73.

Belongs to the DEFL family.

Its subcellular location is the secreted. The sequence is that of Putative defensin-like protein 129 (LCR13) from Arabidopsis thaliana (Mouse-ear cress).